Here is a 353-residue protein sequence, read N- to C-terminus: Biotin synthase (353 aa).

Low complexity predominate over residues 1 to 22 (MTACSTTPTTSATSAQPAAGSP). The disordered stretch occupies residues 1–30 (MTACSTTPTTSATSAQPAAGSPLQWHARPS). One can recognise a Radical SAM core domain in the interval 72–299 (GDIELATLLS…TARVRLSAGR (228 aa)). [4Fe-4S] cluster contacts are provided by Cys-87, Cys-91, and Cys-94. Positions 131, 162, 222, and 294 each coordinate [2Fe-2S] cluster.

This sequence belongs to the radical SAM superfamily. Biotin synthase family. Homodimer. Requires [4Fe-4S] cluster as cofactor. [2Fe-2S] cluster is required as a cofactor.

It carries out the reaction (4R,5S)-dethiobiotin + (sulfur carrier)-SH + 2 reduced [2Fe-2S]-[ferredoxin] + 2 S-adenosyl-L-methionine = (sulfur carrier)-H + biotin + 2 5'-deoxyadenosine + 2 L-methionine + 2 oxidized [2Fe-2S]-[ferredoxin]. It participates in cofactor biosynthesis; biotin biosynthesis; biotin from 7,8-diaminononanoate: step 2/2. Catalyzes the conversion of dethiobiotin (DTB) to biotin by the insertion of a sulfur atom into dethiobiotin via a radical-based mechanism. The protein is Biotin synthase of Delftia acidovorans (strain DSM 14801 / SPH-1).